A 153-amino-acid polypeptide reads, in one-letter code: UPF0251 protein Daud_0090 (153 aa).

Residues E129–S138 show a composition bias toward basic and acidic residues. The segment at E129–R153 is disordered. Residues R139–R153 are compositionally biased toward basic residues.

It belongs to the UPF0251 family.

The sequence is that of UPF0251 protein Daud_0090 from Desulforudis audaxviator (strain MP104C).